The chain runs to 257 residues: Enolase-phosphatase E1 (257 aa).

D16 and E18 together coordinate Mg(2+). Substrate-binding positions include 150 to 151 (SS) and K184. D209 contributes to the Mg(2+) binding site.

This sequence belongs to the HAD-like hydrolase superfamily. MasA/MtnC family. As to quaternary structure, monomer. Requires Mg(2+) as cofactor.

Its subcellular location is the cytoplasm. It localises to the nucleus. The enzyme catalyses 5-methylsulfanyl-2,3-dioxopentyl phosphate + H2O = 1,2-dihydroxy-5-(methylsulfanyl)pent-1-en-3-one + phosphate. It functions in the pathway amino-acid biosynthesis; L-methionine biosynthesis via salvage pathway; L-methionine from S-methyl-5-thio-alpha-D-ribose 1-phosphate: step 3/6. It participates in amino-acid biosynthesis; L-methionine biosynthesis via salvage pathway; L-methionine from S-methyl-5-thio-alpha-D-ribose 1-phosphate: step 4/6. Functionally, bifunctional enzyme that catalyzes the enolization of 2,3-diketo-5-methylthiopentyl-1-phosphate (DK-MTP-1-P) into the intermediate 2-hydroxy-3-keto-5-methylthiopentenyl-1-phosphate (HK-MTPenyl-1-P), which is then dephosphorylated to form the acireductone 1,2-dihydroxy-3-keto-5-methylthiopentene (DHK-MTPene). The sequence is that of Enolase-phosphatase E1 (Enoph1) from Mus musculus (Mouse).